Reading from the N-terminus, the 397-residue chain is MAKAKFERNKPHCNIGTIGHVDHGKTTLTAAITKVLAEAGGGNTFVDYANIDKAPEERERGITISTSHVEYETETRHYAHVDCPGHADYVKNMITGAAQMDGAILVVSAADGPMPQTREHILLARQVGVPALVVFMNKVDQVDDPELLELVEMEIRELLSSYDFPGDDIPIVKGSALAALEDKNPEIGKEAILSLMAAVDEYIPQPERPLDKSFLMPIEDVFSISGRGTVVTGRVETGIVKVGEEVEIVGLRDTKKTTVTGVEMFRKLLDQGQAGDNIGALLRGTARTEVERGQVLAKPGSITPHTEFKAEVYVLSKDEGGRHTPFFANYRPQFYFRTTDVTGEITLPEDVEMVMPGDNIAFGVKLIAPIAMDPGLRFAIREGGRTVGAGVVSSIIK.

In terms of domain architecture, tr-type G spans 10-207 (KPHCNIGTIG…AVDEYIPQPE (198 aa)). Positions 19–26 (GHVDHGKT) are G1. Position 19-26 (19-26 (GHVDHGKT)) interacts with GTP. Thr26 contributes to the Mg(2+) binding site. The G2 stretch occupies residues 61-65 (GITIS). Positions 82-85 (DCPG) are G3. GTP contacts are provided by residues 82–86 (DCPGH) and 137–140 (NKVD). The G4 stretch occupies residues 137–140 (NKVD). The interval 175-177 (SAL) is G5.

It belongs to the TRAFAC class translation factor GTPase superfamily. Classic translation factor GTPase family. EF-Tu/EF-1A subfamily. As to quaternary structure, monomer.

It is found in the cytoplasm. The enzyme catalyses GTP + H2O = GDP + phosphate + H(+). Its function is as follows. GTP hydrolase that promotes the GTP-dependent binding of aminoacyl-tRNA to the A-site of ribosomes during protein biosynthesis. In Zymomonas mobilis subsp. mobilis (strain ATCC 31821 / ZM4 / CP4), this protein is Elongation factor Tu.